Consider the following 285-residue polypeptide: Transcription factor JAMYB (285 aa).

HTH myb-type domains follow at residues 26 to 78 and 79 to 133; these read SAEL…LNYL and RPDV…QKHA. 2 consecutive DNA-binding regions (H-T-H motif) follow at residues 54-78 and 106-129; these read WNAL…LNYL and WSKI…RTRV.

Its subcellular location is the nucleus. Probable transcription factor that may be involved in the jasmonate-dependent defense responses to the rice blast fungus Magnaporthe oryzae. Does not seem to function in the salicylic acid-dependent signaling pathway. This Oryza sativa subsp. japonica (Rice) protein is Transcription factor JAMYB.